The sequence spans 338 residues: Ketol-acid reductoisomerase (NADP(+)) (338 aa).

The region spanning 1 to 181 (MQVYYDKDAD…GGGRAGVIET (181 aa)) is the KARI N-terminal Rossmann domain. NADP(+) is bound by residues 24–27 (YGSQ), Arg47, Ser50, Ser52, and 82–85 (DEHQ). The active site involves His107. An NADP(+)-binding site is contributed by Gly133. In terms of domain architecture, KARI C-terminal knotted spans 182-327 (SFKDETETDL…AKLRDMMPWI (146 aa)). The Mg(2+) site is built by Asp190, Glu194, Glu226, and Glu230. Ser251 provides a ligand contact to substrate.

It belongs to the ketol-acid reductoisomerase family. Mg(2+) serves as cofactor.

The catalysed reaction is (2R)-2,3-dihydroxy-3-methylbutanoate + NADP(+) = (2S)-2-acetolactate + NADPH + H(+). It carries out the reaction (2R,3R)-2,3-dihydroxy-3-methylpentanoate + NADP(+) = (S)-2-ethyl-2-hydroxy-3-oxobutanoate + NADPH + H(+). Its pathway is amino-acid biosynthesis; L-isoleucine biosynthesis; L-isoleucine from 2-oxobutanoate: step 2/4. It functions in the pathway amino-acid biosynthesis; L-valine biosynthesis; L-valine from pyruvate: step 2/4. Functionally, involved in the biosynthesis of branched-chain amino acids (BCAA). Catalyzes an alkyl-migration followed by a ketol-acid reduction of (S)-2-acetolactate (S2AL) to yield (R)-2,3-dihydroxy-isovalerate. In the isomerase reaction, S2AL is rearranged via a Mg-dependent methyl migration to produce 3-hydroxy-3-methyl-2-ketobutyrate (HMKB). In the reductase reaction, this 2-ketoacid undergoes a metal-dependent reduction by NADPH to yield (R)-2,3-dihydroxy-isovalerate. This chain is Ketol-acid reductoisomerase (NADP(+)), found in Thioalkalivibrio sulfidiphilus (strain HL-EbGR7).